A 395-amino-acid chain; its full sequence is RNA polymerase II elongation factor ELL3 (395 aa).

4 disordered regions span residues 124-149, 163-182, 194-218, and 233-279; these read SSLQ…DYPE, VPDP…SREH, LPNR…KRPA, and LAPS…SLSP. Over residues 130 to 140 the composition is skewed to basic and acidic residues; that stretch reads NRTEDARDRES. The span at 168 to 177 shows a compositional bias: polar residues; that stretch reads ASSQGQSLPG. The span at 246–258 shows a compositional bias: acidic residues; the sequence is LQEEDWEQEDKDE. Over residues 268-277 the composition is skewed to polar residues; that stretch reads PSVQADSESL. Residues 283 to 393 form the OCEL domain; the sequence is PDYLLQYRAI…LILEFEEKNR (111 aa).

It belongs to the ELL/occludin family. In terms of assembly, interacts with AFF4. Component of the super elongation complex (SEC), at least composed of EAF1, EAF2, CDK9, MLLT3/AF9, AFF (AFF1 or AFF4), the P-TEFb complex and ELL (ELL, ELL2 or ELL3). Component of the little elongation complex (LEC), at least composed of ELL (ELL, ELL2 or ELL3), ZC3H8, ICE1 and ICE2.

The protein resides in the nucleus. Functionally, enhancer-binding elongation factor that specifically binds enhancers in embryonic stem cells (ES cells), marks them, and is required for their future activation during stem cell specification. Elongation factor component of the super elongation complex (SEC), a complex required to increase the catalytic rate of RNA polymerase II transcription by suppressing transient pausing by the polymerase at multiple sites along the DNA. Component of the little elongation complex (LEC), a complex required to regulate small nuclear RNA (snRNA) gene transcription by RNA polymerase II and III. Does not only bind to enhancer regions of active genes, but also marks the enhancers that are in a poised or inactive state in ES cells and is required for establishing proper RNA polymerase II occupancy at developmentally regulated genes in a cohesin-dependent manner. Probably required for priming developmentally regulated genes for later recruitment of the super elongation complex (SEC), for transcriptional activation during differentiation. Required for recruitment of P-TEFb within SEC during differentiation. Probably preloaded on germ cell chromatin, suggesting that it may prime gene activation by marking enhancers as early as in the germ cells. Promoting epithelial-mesenchymal transition (EMT). In Bos taurus (Bovine), this protein is RNA polymerase II elongation factor ELL3 (ELL3).